The sequence spans 135 residues: T-cell receptor gamma chain V region V108A (135 aa).

Positions 1-18 (MLLLRWFTSCCLWVFGLG) are cleaved as a signal peptide. The tract at residues 19-116 (QLEQTELSVT…EATYYCAVWM (98 aa)) is v segment. Positions 117–135 (RWSSGFHKVFAEGTKLIVI) are j segment.

The polypeptide is T-cell receptor gamma chain V region V108A (Mus musculus (Mouse)).